Here is a 96-residue protein sequence, read N- to C-terminus: Conotoxin Mr15.1 (96 aa).

Positions 1–20 (MSTLKMMLLILLLLLPLATF) are cleaved as a signal peptide. Residues 21–57 (DSDGQAIPGGGIPSAVNSRVGRLLGGDEKSGRSLEKR) constitute a propeptide that is removed on maturation.

It belongs to the conotoxin N superfamily. Contains 4 disulfide bonds. In terms of tissue distribution, expressed by the venom duct.

It localises to the secreted. This is Conotoxin Mr15.1 from Conus marmoreus (Marble cone).